Consider the following 227-residue polypeptide: Orotidine 5'-phosphate decarboxylase (227 aa).

Substrate contacts are provided by residues Asp12, Lys34, 61–70 (DLKLHDIPNT), Thr117, Arg178, Gln187, Gly207, and Arg208. Catalysis depends on Lys63, which acts as the Proton donor.

This sequence belongs to the OMP decarboxylase family. Type 1 subfamily. In terms of assembly, homodimer.

The enzyme catalyses orotidine 5'-phosphate + H(+) = UMP + CO2. It functions in the pathway pyrimidine metabolism; UMP biosynthesis via de novo pathway; UMP from orotate: step 2/2. In terms of biological role, catalyzes the decarboxylation of orotidine 5'-monophosphate (OMP) to uridine 5'-monophosphate (UMP). The chain is Orotidine 5'-phosphate decarboxylase from Anaeromyxobacter dehalogenans (strain 2CP-1 / ATCC BAA-258).